The sequence spans 361 residues: S-adenosylmethionine:tRNA ribosyltransferase-isomerase (361 aa).

It belongs to the QueA family. In terms of assembly, monomer.

The protein resides in the cytoplasm. The enzyme catalyses 7-aminomethyl-7-carbaguanosine(34) in tRNA + S-adenosyl-L-methionine = epoxyqueuosine(34) in tRNA + adenine + L-methionine + 2 H(+). It participates in tRNA modification; tRNA-queuosine biosynthesis. Functionally, transfers and isomerizes the ribose moiety from AdoMet to the 7-aminomethyl group of 7-deazaguanine (preQ1-tRNA) to give epoxyqueuosine (oQ-tRNA). This is S-adenosylmethionine:tRNA ribosyltransferase-isomerase from Rhizobium etli (strain ATCC 51251 / DSM 11541 / JCM 21823 / NBRC 15573 / CFN 42).